The following is a 138-amino-acid chain: Large ribosomal subunit protein uL16 (138 aa).

The segment covering 1–15 has biased composition (basic residues); the sequence is MLSPKKVKYRKKQRG. The interval 1-21 is disordered; the sequence is MLSPKKVKYRKKQRGRLSGEA.

The protein belongs to the universal ribosomal protein uL16 family. Part of the 50S ribosomal subunit.

In terms of biological role, binds 23S rRNA and is also seen to make contacts with the A and possibly P site tRNAs. The protein is Large ribosomal subunit protein uL16 of Borreliella afzelii (strain PKo) (Borrelia afzelii).